A 1502-amino-acid polypeptide reads, in one-letter code: Nucleoporin NUP170 (1502 aa).

The interval 1–31 (MFQSFFHNNGPAAAGETFSDSRSYPLTNHQE) is disordered. The segment covering 18–30 (FSDSRSYPLTNHQ) has biased composition (polar residues). The segment at 233–261 (LISTTMELFMFAISLDKATNELSVFNTHL) is leucine-zipper. A Phosphoserine modification is found at Ser1247.

This sequence belongs to the non-repetitive/WGA-negative nucleoporin family. In terms of assembly, component of the nuclear pore complex (NPC). NPC constitutes the exclusive means of nucleocytoplasmic transport. NPCs allow the passive diffusion of ions and small molecules and the active, nuclear transport receptor-mediated bidirectional transport of macromolecules such as proteins, RNAs, ribonucleoparticles (RNPs), and ribosomal subunits across the nuclear envelope. Due to its 8-fold rotational symmetry, all subunits are present with 8 copies or multiples thereof. During mitosis NUP53 changes its binding partner within the NPC from NUP170 to NIC96, exposing a high affinity binding site for the karyopherin PSE1, and retaining it in the NPC.

Its subcellular location is the nucleus. It is found in the nuclear pore complex. The protein resides in the nucleus membrane. Functionally, functions as a component of the nuclear pore complex (NPC). NPC components, collectively referred to as nucleoporins (NUPs), can play the role of both NPC structural components and of docking or interaction partners for transiently associated nuclear transport factors. NUP170 probably plays an important role in NPC assembly and organization. In addition it is required for chromosome transmission fidelity. The polypeptide is Nucleoporin NUP170 (NUP170) (Saccharomyces cerevisiae (strain ATCC 204508 / S288c) (Baker's yeast)).